The sequence spans 130 residues: MRLMISVLAICIGASLGALARWRLGLWLNPGAVLPLGTLAANLIGGYLIGICVAVFQALPNLDPVWRLALITGFLGGLTTFSSFSAEVVGMLGQQRYALGFGTAGLHLFGSLLLTLAGIKTATFLIAFNT.

Helical transmembrane passes span Val-7–Trp-27, Leu-36–Phe-56, Ala-69–Val-89, and Leu-99–Ile-119. 2 residues coordinate Na(+): Gly-76 and Thr-79.

It belongs to the fluoride channel Fluc/FEX (TC 1.A.43) family.

The protein localises to the cell inner membrane. The catalysed reaction is fluoride(in) = fluoride(out). Its activity is regulated as follows. Na(+) is not transported, but it plays an essential structural role and its presence is essential for fluoride channel function. In terms of biological role, fluoride-specific ion channel. Important for reducing fluoride concentration in the cell, thus reducing its toxicity. This chain is Fluoride-specific ion channel FluC, found in Albidiferax ferrireducens (strain ATCC BAA-621 / DSM 15236 / T118) (Rhodoferax ferrireducens).